We begin with the raw amino-acid sequence, 620 residues long: UPF0313 protein BT_0254 (620 aa).

Residues 311-591 (AYDMIKFSVN…AQRQFFFWYK (281 aa)) form the Radical SAM core domain. 3 residues coordinate [4Fe-4S] cluster: C325, C329, and C332.

It belongs to the UPF0313 family. The cofactor is [4Fe-4S] cluster.

The polypeptide is UPF0313 protein BT_0254 (Bacteroides thetaiotaomicron (strain ATCC 29148 / DSM 2079 / JCM 5827 / CCUG 10774 / NCTC 10582 / VPI-5482 / E50)).